The primary structure comprises 252 residues: MILHAQAKHGKPGLPWLVFLHGFSGDCHEWQEVGEAFADYSRLYVDLPGHGGSAAISVDGFDDVTDLLRKTLVSYNILDFWLVGYSLGGRVAMMAACQGLTGLCGVIVEGGHPGLQNAEQRAERQRSDRQWAQRFCTEPLTAVFADWYQQPVFASLNDDQRRELVVLRSNNNGATLAAMLEATSLAVQPDLRANLSARTFAFYYLCGERDSKFRALAAELAADCHVIPRAGHNAHRENPAGVIASLAQILRF.

This sequence belongs to the AB hydrolase superfamily. MenH family. As to quaternary structure, monomer.

The enzyme catalyses 5-enolpyruvoyl-6-hydroxy-2-succinyl-cyclohex-3-ene-1-carboxylate = (1R,6R)-6-hydroxy-2-succinyl-cyclohexa-2,4-diene-1-carboxylate + pyruvate. Its pathway is quinol/quinone metabolism; 1,4-dihydroxy-2-naphthoate biosynthesis; 1,4-dihydroxy-2-naphthoate from chorismate: step 3/7. It functions in the pathway quinol/quinone metabolism; menaquinone biosynthesis. Its function is as follows. Catalyzes a proton abstraction reaction that results in 2,5-elimination of pyruvate from 2-succinyl-5-enolpyruvyl-6-hydroxy-3-cyclohexene-1-carboxylate (SEPHCHC) and the formation of 2-succinyl-6-hydroxy-2,4-cyclohexadiene-1-carboxylate (SHCHC). This is 2-succinyl-6-hydroxy-2,4-cyclohexadiene-1-carboxylate synthase from Escherichia coli O9:H4 (strain HS).